The primary structure comprises 233 residues: Orotidine 5'-phosphate decarboxylase (233 aa).

Substrate-binding positions include aspartate 13, lysine 35, 62 to 71 (DLKFHDIPNT), threonine 122, arginine 182, glutamine 191, glycine 211, and arginine 212. Lysine 64 serves as the catalytic Proton donor.

It belongs to the OMP decarboxylase family. Type 1 subfamily. In terms of assembly, homodimer.

The enzyme catalyses orotidine 5'-phosphate + H(+) = UMP + CO2. It participates in pyrimidine metabolism; UMP biosynthesis via de novo pathway; UMP from orotate: step 2/2. Catalyzes the decarboxylation of orotidine 5'-monophosphate (OMP) to uridine 5'-monophosphate (UMP). This is Orotidine 5'-phosphate decarboxylase from Pseudomonas putida (strain ATCC 47054 / DSM 6125 / CFBP 8728 / NCIMB 11950 / KT2440).